Reading from the N-terminus, the 186-residue chain is uncharacterized protein (186 aa).

Asn34 carries an N-linked (GlcNAc...) asparagine; by host glycan. The next 3 membrane-spanning stretches (helical) occupy residues 47–67, 114–134, and 144–164; these read IGMV…ATTF, ILET…IVLL, and LEMI…TLFF.

The protein resides in the membrane. This is an uncharacterized protein from Acanthamoeba polyphaga mimivirus (APMV).